Here is a 316-residue protein sequence, read N- to C-terminus: Homoserine kinase (316 aa).

Position 96–106 (96–106 (PHGRGLGSSGA)) interacts with ATP.

It belongs to the GHMP kinase family. Homoserine kinase subfamily.

Its subcellular location is the cytoplasm. It carries out the reaction L-homoserine + ATP = O-phospho-L-homoserine + ADP + H(+). Its pathway is amino-acid biosynthesis; L-threonine biosynthesis; L-threonine from L-aspartate: step 4/5. In terms of biological role, catalyzes the ATP-dependent phosphorylation of L-homoserine to L-homoserine phosphate. This is Homoserine kinase from Clavibacter michiganensis subsp. michiganensis (strain NCPPB 382).